The following is a 243-amino-acid chain: Probable fructoselysine utilization operon transcriptional repressor (243 aa).

The 69-residue stretch at 10–78 (QLLYATVRQR…QGKGTFVQSQ (69 aa)) folds into the HTH gntR-type domain. The H-T-H motif DNA-binding region spans 38–57 (ENELCTQYNVSRITIRKAIS).

Its pathway is carbohydrate metabolism; fructoselysine degradation [regulation]. Its function is as follows. May regulate the transcription of the frlABCDR operon, involved in the utilization of fructoselysine and psicoselysine. In Escherichia coli O157:H7, this protein is Probable fructoselysine utilization operon transcriptional repressor (frlR).